A 524-amino-acid polypeptide reads, in one-letter code: Ribose import ATP-binding protein RbsA (524 aa).

2 ABC transporter domains span residues 17 to 252 (LQLD…GRSI) and 263 to 505 (IGQP…VSQV). 49–56 (GENGAGKS) is an ATP binding site.

Belongs to the ABC transporter superfamily. Ribose importer (TC 3.A.1.2.1) family. The complex is composed of an ATP-binding protein (RbsA), two transmembrane proteins (RbsC) and a solute-binding protein (RbsB).

The protein localises to the cell membrane. The catalysed reaction is D-ribose(out) + ATP + H2O = D-ribose(in) + ADP + phosphate + H(+). Its function is as follows. Part of the ABC transporter complex RbsABC involved in ribose import. Responsible for energy coupling to the transport system. In Corynebacterium glutamicum (strain ATCC 13032 / DSM 20300 / JCM 1318 / BCRC 11384 / CCUG 27702 / LMG 3730 / NBRC 12168 / NCIMB 10025 / NRRL B-2784 / 534), this protein is Ribose import ATP-binding protein RbsA.